Consider the following 245-residue polypeptide: Ribonuclease 3 (245 aa).

The RNase III domain occupies 19–148; that stretch reads FKVFQEKIGI…FIGALYLDQG (130 aa). Residue E61 coordinates Mg(2+). Residue D65 is part of the active site. Mg(2+)-binding residues include D134 and E137. The active site involves E137. The DRBM domain maps to 174–243; sequence DYKSQLQELI…AAEALKKLKE (70 aa).

This sequence belongs to the ribonuclease III family. As to quaternary structure, homodimer. Mg(2+) is required as a cofactor.

The protein localises to the cytoplasm. The catalysed reaction is Endonucleolytic cleavage to 5'-phosphomonoester.. Digests double-stranded RNA. Involved in the processing of primary rRNA transcript to yield the immediate precursors to the large and small rRNAs (23S and 16S). Processes some mRNAs, and tRNAs when they are encoded in the rRNA operon. Processes pre-crRNA and tracrRNA of type II CRISPR loci if present in the organism. The polypeptide is Ribonuclease 3 (Bacillus cereus (strain ZK / E33L)).